The chain runs to 269 residues: Meiotically up-regulated gene 43 protein (269 aa).

It localises to the mitochondrion. Its function is as follows. Has a role in meiosis. The polypeptide is Meiotically up-regulated gene 43 protein (mug43) (Schizosaccharomyces pombe (strain 972 / ATCC 24843) (Fission yeast)).